A 131-amino-acid chain; its full sequence is Holo-[acyl-carrier-protein] synthase (131 aa).

Mg(2+)-binding residues include D8 and E59.

Belongs to the P-Pant transferase superfamily. AcpS family. Mg(2+) serves as cofactor.

Its subcellular location is the cytoplasm. The catalysed reaction is apo-[ACP] + CoA = holo-[ACP] + adenosine 3',5'-bisphosphate + H(+). Transfers the 4'-phosphopantetheine moiety from coenzyme A to a Ser of acyl-carrier-protein. The protein is Holo-[acyl-carrier-protein] synthase of Orientia tsutsugamushi (strain Boryong) (Rickettsia tsutsugamushi).